A 208-amino-acid chain; its full sequence is FAS-associated death domain protein (208 aa).

Residues 3-81 form the DED domain; that stretch reads PFLVLLHSVS…RHDLLRRVDD (79 aa). The region spanning 97-181 is the Death domain; sequence LCAAFNVICD…LVADLVQEVQ (85 aa). (Microbial infection) N-beta-linked (GlcNAc) arginine glycosylation is present at arginine 117. Positions 187–208 are disordered; that stretch reads QNRSGAMSPMSWNSDASTSEAS. Serine 194 is modified (phosphoserine).

Can self-associate. Component of the AIM2 PANoptosome complex, a multiprotein complex that drives inflammatory cell death (PANoptosis). Component of the death-induced signaling complex (DISC) composed of cell surface receptor FAS/CD95 or TNFRSF1A, adapter protein FADD and the CASP8 protease; recruitment of CASP8 to the complex is required for processing of CASP8 into the p18 and p10 subunits. Interacts (via death domain) with FAS (via death domain). Interacts directly (via DED domain) with NOL3 (via CARD domain); inhibits death-inducing signaling complex (DISC) assembly by inhibiting the increase in FAS-FADD binding induced by FAS activation. Interacts with CFLAR, PEA15 and MBD4. When phosphorylated, part of a complex containing HIPK3 and FAS. May interact with MAVS/IPS1. Interacts with MOCV v-CFLAR protein and PIDD1. Interacts with RIPK1 and TRADD. Interacts with stimulated TNFRSF10B. Interacts with DDX24. As to quaternary structure, (Microbial infection) Interacts with human papillomavirus 16/HPV16 protein E6. In terms of assembly, (Microbial infection) Interacts with molluscum contagiosum virus proteins MC159L/v-CFLAR and MC160L. (Microbial infection) Glycosylated at Arg-117 by enteropathogenic E.coli protein NleB1, C.rodentium protein NleB and S.typhimurium protein Ssek1: arginine GlcNAcylation prevents recruitment of caspase-8 or caspase-10 to the activated Fas (CD95) or TNFR-1 receptors. As to expression, expressed in a wide variety of tissues, except for peripheral blood mononuclear leukocytes.

The protein resides in the cytoplasm. In terms of biological role, apoptotic adapter molecule that recruits caspases CASP8 or CASP10 to the activated FAS/CD95 or TNFRSF1A/TNFR-1 receptors. The resulting aggregate called the death-inducing signaling complex (DISC) performs CASP8 proteolytic activation. Active CASP8 initiates the subsequent cascade of caspases mediating apoptosis. Involved in interferon-mediated antiviral immune response, playing a role in the positive regulation of interferon signaling. The protein is FAS-associated death domain protein of Homo sapiens (Human).